The sequence spans 972 residues: uncharacterized protein (972 aa).

The N-terminal stretch at 1–21 (MTNMILLSAVFLSLAILETHC) is a signal peptide. The Extracellular portion of the chain corresponds to 22–932 (ANHISTGIST…KELGEKLYHV (911 aa)). The disordered stretch occupies residues 892–912 (EPTVTTTTESPPPPTTTTRQI). The helical transmembrane segment at 933–953 (LFFMGVLTVSVAGGVIILSFI) threads the bilayer. The Cytoplasmic segment spans residues 954 to 972 (GCLIMRKMEDAPQKTKYSV).

The protein resides in the host membrane. This is an uncharacterized protein from Magallana gigas (Pacific oyster).